The primary structure comprises 335 residues: MAQEAPRWLEPSPFEWKDQTGLAVKTAIPGAKPTVAIDVASVTKSYGDKPVINGLSFTVAAGECFGLLGPNGAGKSTITRMILGMTTPGTGEITVLGVPVPSRARLARMRIGVVPQFDNLDLEFTVRENLLVFGRYFRMSTREIEAVIPSLLEFARLENKADARVSDLSGGMKRRLTLARALINDPQLLILDEPTTGLDPHARHLIWERLRSLLARGKTILLTTHIMEEAERLCDRLCVLEAGHKIAEGRPHMLIDEKIGCQVIEIYGGDPHELSALVSPHARHIEVSGETVFCYASDPEQVRVQLDGRAGVRFLQRPPNLEDVFLRLTGRELKD.

Residues 37 to 267 form the ABC transporter domain; sequence IDVASVTKSY…KIGCQVIEIY (231 aa). 69–76 is an ATP binding site; the sequence is GPNGAGKS.

It belongs to the ABC transporter superfamily. Lipooligosaccharide exporter (TC 3.A.1.102) family. The complex is composed of two ATP-binding proteins (NodI) and two transmembrane proteins (NodJ).

Its subcellular location is the cell inner membrane. Its function is as follows. Part of the ABC transporter complex NodIJ involved in the export of the nodulation factors (Nod factors), the bacterial signal molecules that induce symbiosis and subsequent nodulation induction. Nod factors are LCO (lipo-chitin oligosaccharide), a modified beta-1,4-linked N-acetylglucosamine oligosaccharide. This subunit is responsible for energy coupling to the transport system. This is Nod factor export ATP-binding protein I from Rhizobium meliloti (strain 1021) (Ensifer meliloti).